The chain runs to 161 residues: Nucleotide-binding protein RC1_3464 (161 aa).

This sequence belongs to the YajQ family.

Functionally, nucleotide-binding protein. In Rhodospirillum centenum (strain ATCC 51521 / SW), this protein is Nucleotide-binding protein RC1_3464.